The chain runs to 399 residues: LIM/homeobox protein Lhx5 (399 aa).

LIM zinc-binding domains follow at residues 3–61 and 62–125; these read VHCA…RRFG and TKCA…ASAI. 2 disordered regions span residues 136–185 and 301–399; these read CTDR…GPRT and PSSQ…NTVW. The span at 151-167 shows a compositional bias: basic and acidic residues; it reads DDTKETDNSTSSDKDTN. A DNA-binding region (homeobox) is located at residues 180–239; that stretch reads RRGPRTTIKAKQLETLKAAFVATPKPTRHIREQLAQETGLNMRVIQVWFQNRRSKERRMK.

The protein localises to the nucleus. Functionally, probably involved in the patterning of the nervous system, in particular in the early specification of the diencephalon. The polypeptide is LIM/homeobox protein Lhx5 (lhx5) (Danio rerio (Zebrafish)).